A 90-amino-acid chain; its full sequence is Putative regulatory protein NT01CX_2250 (90 aa).

This sequence belongs to the RemA family.

This chain is Putative regulatory protein NT01CX_2250, found in Clostridium novyi (strain NT).